We begin with the raw amino-acid sequence, 203 residues long: Large ribosomal subunit protein uL22 (203 aa).

Polar residues predominate over residues 138–167; sequence PENTQSGALSQQSQAEQPQNDPENGVDSQL. Residues 138–203 form a disordered region; that stretch reads PENTQSGALS…TVLAQEKEVK (66 aa). The segment covering 168 to 177 has biased composition (low complexity); that stretch reads SAKTNSTTTA. The segment covering 183–196 has biased composition (polar residues); it reads ADNSTKNDATNTVL.

Belongs to the universal ribosomal protein uL22 family. Part of the 50S ribosomal subunit.

In terms of biological role, this protein binds specifically to 23S rRNA; its binding is stimulated by other ribosomal proteins, e.g. L4, L17, and L20. It is important during the early stages of 50S assembly. It makes multiple contacts with different domains of the 23S rRNA in the assembled 50S subunit and ribosome. The globular domain of the protein is located near the polypeptide exit tunnel on the outside of the subunit, while an extended beta-hairpin is found that lines the wall of the exit tunnel in the center of the 70S ribosome. The polypeptide is Large ribosomal subunit protein uL22 (Mesomycoplasma hyopneumoniae (strain 7448) (Mycoplasma hyopneumoniae)).